We begin with the raw amino-acid sequence, 542 residues long: Chaperonin GroEL 1 (542 aa).

Residues 29–32 (TIGP), 86–90 (DGTTT), Gly-414, 479–481 (DAL), and Asp-495 each bind ATP.

Belongs to the chaperonin (HSP60) family. As to quaternary structure, forms a cylinder of 14 subunits composed of two heptameric rings stacked back-to-back. Interacts with the co-chaperonin GroES.

It is found in the cytoplasm. It catalyses the reaction ATP + H2O + a folded polypeptide = ADP + phosphate + an unfolded polypeptide.. Its function is as follows. Together with its co-chaperonin GroES, plays an essential role in assisting protein folding. The GroEL-GroES system forms a nano-cage that allows encapsulation of the non-native substrate proteins and provides a physical environment optimized to promote and accelerate protein folding. This chain is Chaperonin GroEL 1, found in Synechococcus sp. (strain JA-3-3Ab) (Cyanobacteria bacterium Yellowstone A-Prime).